A 138-amino-acid polypeptide reads, in one-letter code: ATP synthase epsilon chain (138 aa).

It belongs to the ATPase epsilon chain family. F-type ATPases have 2 components, CF(1) - the catalytic core - and CF(0) - the membrane proton channel. CF(1) has five subunits: alpha(3), beta(3), gamma(1), delta(1), epsilon(1). CF(0) has three main subunits: a, b and c.

Its subcellular location is the cell inner membrane. Its function is as follows. Produces ATP from ADP in the presence of a proton gradient across the membrane. The sequence is that of ATP synthase epsilon chain from Geobacter sulfurreducens (strain ATCC 51573 / DSM 12127 / PCA).